The chain runs to 603 residues: MAVARKIRTLLTVNILVFVGIVLFSVYCRLQGRSQELVRIVSGDRRVRSRHAKVGTLGDREAILQRLDHLEEVVYNQLNGLAKPIGLVEGPGGLGQGGLAATLRDDGQEAEGKYEEYGYNAQLSDRISLDRSIPDYRPRKCRQMSYAQDLPQVSVVFIFVNEALSVILRSVHSVVNHTPSQLLKEVILVDDNSDNVELKFNLDQYVNKRYPGLVKIVRNSRREGLIRARLQGWKAATAPVVGFFDAHVEFNTGWAEPALSRIREDRRRIVLPAIDNIKYSTFEVQQYANAAHGYNWGLRCMYIIPPQDWLDRGDESAPIRTPAMIGCSFVVDREYFGDIGLLDPGMEVYGGENVELGMRVWQCGGSMEVLPCSRVAHIERTRKPYNNDIDYYAKRNALRAAEVWMDDFKSHVYMAWNIPMSNPGVDFGDVSERLALRQRLKCRSFKWYLENVYPEMRVYNNTLTYGEVRNSKASAYCLDQGAEDGDRAILYPCHGMSSQLVRYSADGLLQLGPLGSTAFLPDSKCLVDDGTGRMPTLKKCEDVARPTQRLWDFTQSGPIVSRATGRCLEVEMSKDANFGLRLVVQRCSGQKWMIRNWIKHARH.

At 1-6 (MAVARK) the chain is on the cytoplasmic side. Residues 7 to 29 (IRTLLTVNILVFVGIVLFSVYCR) form a helical; Signal-anchor for type II membrane protein membrane-spanning segment. At 30 to 603 (LQGRSQELVR…IRNWIKHARH (574 aa)) the chain is on the lumenal side. 2 disulfides stabilise this stretch: C141/C372 and C363/C442. Residues 150–261 (LPQVSVVFIF…TGWAEPALSR (112 aa)) are catalytic subdomain A. Residues D191 and R222 each contribute to the substrate site. Positions 245, 247, and 377 each coordinate Mn(2+). The interval 318 to 380 (PIRTPAMIGC…PCSRVAHIER (63 aa)) is catalytic subdomain B. Substrate-binding residues include R380 and Y385. N460 carries an N-linked (GlcNAc...) asparagine glycan. The region spanning 464 to 600 (TYGEVRNSKA…KWMIRNWIKH (137 aa)) is the Ricin B-type lectin domain. 3 disulfides stabilise this stretch: C477/C493, C525/C540, and C567/C587.

The protein belongs to the glycosyltransferase 2 family. GalNAc-T subfamily. Requires Mn(2+) as cofactor. Specifically expressed in brain. Not expressed in heart, placenta, lung, liver, skeletal muscle, kidney, pancreas, spleen, thymus, prostate, testis, ovary, small intestine, colon and leukocyte. In brain, it is expressed in cerebellum, frontal lobe, temporal lobe, putamen and spinal cord, weakly expressed in cerebral cortex. Not expressed in medulla and occipital pole.

It is found in the golgi apparatus membrane. It catalyses the reaction L-seryl-[protein] + UDP-N-acetyl-alpha-D-galactosamine = a 3-O-[N-acetyl-alpha-D-galactosaminyl]-L-seryl-[protein] + UDP + H(+). It carries out the reaction L-threonyl-[protein] + UDP-N-acetyl-alpha-D-galactosamine = a 3-O-[N-acetyl-alpha-D-galactosaminyl]-L-threonyl-[protein] + UDP + H(+). It functions in the pathway protein modification; protein glycosylation. Catalyzes the initial reaction in O-linked oligosaccharide biosynthesis, the transfer of an N-acetyl-D-galactosamine residue to a serine or threonine residue on the protein receptor. Does not glycosylate apomucin or SDC3. This Homo sapiens (Human) protein is Polypeptide N-acetylgalactosaminyltransferase 9 (GALNT9).